The following is a 653-amino-acid chain: MRHFKITSEFDAAGDQPEAIRKLSEGIERGVREQVLLGVTGSGKTFTMASVIEKRQCPALIVAHNKTLAAQLYEEMRMFFPNNAVEYFVSYYDYYQPEAYIPHSDVYIEKDALINEKIDMLRHSATRSILERRDVIVVASVSCIYGLGSPELYSEMTIPLSIGMQIDLCQLKEKLVELQYKSGSQCERGTFSVKGDIVTIFPSHHEDHVWRISMFGDVIESIQEVDNNLGIAVANLEKVKVFPNSHYVTPRPTLMQALSRIEEELQECVINYRKNNKIIEAERILERTKFDIEMMKETGTCKGIENYSRYLCGKAAGEPPNTLLDYLPVDSLMFIDESHITIPQIRSMYNGDRVRKANLITHGFRLPSALDNRPLTFEEWESRKTTLVYVSATPGKYETERTSGVVVEQLIRPTGLVDPICIVKKASGQIADVVNESQATISEGYRVLVTALTKKMAENLSEHMREIGIKVAYLHSDVKTLERMDIIAQLRTGEIDVLIGVNLLREGLDIPECALVCILDADKEGFLRSETSLVQTIGRAARNMNGRVILYADRVTKSMKAAIDETNRRRAVQESYNKAHGITPKSISKSVATSLKDRITVKGTKGSKSKSAAVTEEDIIKLQKEMLLHAENLEFEKALEIRNQINKLSQHKT.

A Helicase ATP-binding domain is found at 25-182 (EGIERGVREQ…EKLVELQYKS (158 aa)). An ATP-binding site is contributed by 38 to 45 (GVTGSGKT). The Beta-hairpin signature appears at 91–114 (YYDYYQPEAYIPHSDVYIEKDALI). The 163-residue stretch at 429–591 (QIADVVNESQ…ITPKSISKSV (163 aa)) folds into the Helicase C-terminal domain. Residues 616–651 (EEDIIKLQKEMLLHAENLEFEKALEIRNQINKLSQH) form the UVR domain.

The protein belongs to the UvrB family. As to quaternary structure, forms a heterotetramer with UvrA during the search for lesions. Interacts with UvrC in an incision complex.

It is found in the cytoplasm. The UvrABC repair system catalyzes the recognition and processing of DNA lesions. A damage recognition complex composed of 2 UvrA and 2 UvrB subunits scans DNA for abnormalities. Upon binding of the UvrA(2)B(2) complex to a putative damaged site, the DNA wraps around one UvrB monomer. DNA wrap is dependent on ATP binding by UvrB and probably causes local melting of the DNA helix, facilitating insertion of UvrB beta-hairpin between the DNA strands. Then UvrB probes one DNA strand for the presence of a lesion. If a lesion is found the UvrA subunits dissociate and the UvrB-DNA preincision complex is formed. This complex is subsequently bound by UvrC and the second UvrB is released. If no lesion is found, the DNA wraps around the other UvrB subunit that will check the other stand for damage. This is UvrABC system protein B from Anaplasma phagocytophilum (strain HZ).